Reading from the N-terminus, the 351-residue chain is Transcription elongation factor A N-terminal and central domain-containing protein (351 aa).

The 78-residue stretch at 5–82 (NQIAARASLI…SKWKAVYKQT (78 aa)) folds into the TFIIS N-terminal domain. Disordered stretches follow at residues 86–119 (ARNS…GICS) and 144–169 (LKPK…LLDP). Polar residues predominate over residues 103–119 (SGPSHDPSQNETLGICS). Over residues 145-165 (KPKEEHFGDGDPESTGKRSSE) the composition is skewed to basic and acidic residues. A TFIIS central domain is found at 173–289 (MRTKCIELLY…EHYLPQVIDG (117 aa)).

The protein is Transcription elongation factor A N-terminal and central domain-containing protein (TCEANC) of Homo sapiens (Human).